A 345-amino-acid polypeptide reads, in one-letter code: Guanine nucleotide-binding protein alpha-4 subunit (345 aa).

Residues 30 to 345 (KDVKLLLLGP…TILSQALEHF (316 aa)) form the G-alpha domain. The G1 motif stretch occupies residues 33-46 (KLLLLGPGESGKST). GTP is bound by residues 38–45 (GPGESGKS), 171–177 (LRCRVRT), 196–200 (DVGGQ), 265–268 (NKKD), and A320. S45 and T177 together coordinate Mg(2+). The interval 169 to 177 (DVLRCRVRT) is G2 motif. The segment at 192–201 (LKIVDVGGQR) is G3 motif. Residues 261–268 (VLFLNKKD) form a G4 motif region. The interval 318–323 (TCAVDT) is G5 motif.

Belongs to the G-alpha family. G proteins are composed of 3 units; alpha, beta and gamma. The alpha chain contains the guanine nucleotide binding site.

Functionally, guanine nucleotide-binding proteins (G proteins) are involved as modulators or transducers in various transmembrane signaling systems. G alpha-4 plays a role in morphogenesis of the multicellular structure. The chain is Guanine nucleotide-binding protein alpha-4 subunit (gpaD) from Dictyostelium discoideum (Social amoeba).